The chain runs to 364 residues: tRNA 2-selenouridine synthase (364 aa).

In terms of domain architecture, Rhodanese spans 14–136; that stretch reads VLNNTPLIDV…AFRNWLMQET (123 aa). The active-site S-selanylcysteine intermediate is the Cys97.

This sequence belongs to the SelU family. Monomer.

It catalyses the reaction 5-methylaminomethyl-2-thiouridine(34) in tRNA + selenophosphate + (2E)-geranyl diphosphate + H2O + H(+) = 5-methylaminomethyl-2-selenouridine(34) in tRNA + (2E)-thiogeraniol + phosphate + diphosphate. It carries out the reaction 5-methylaminomethyl-2-thiouridine(34) in tRNA + (2E)-geranyl diphosphate = 5-methylaminomethyl-S-(2E)-geranyl-thiouridine(34) in tRNA + diphosphate. The enzyme catalyses 5-methylaminomethyl-S-(2E)-geranyl-thiouridine(34) in tRNA + selenophosphate + H(+) = 5-methylaminomethyl-2-(Se-phospho)selenouridine(34) in tRNA + (2E)-thiogeraniol. The catalysed reaction is 5-methylaminomethyl-2-(Se-phospho)selenouridine(34) in tRNA + H2O = 5-methylaminomethyl-2-selenouridine(34) in tRNA + phosphate. In terms of biological role, involved in the post-transcriptional modification of the uridine at the wobble position (U34) of tRNA(Lys), tRNA(Glu) and tRNA(Gln). Catalyzes the conversion of 2-thiouridine (S2U-RNA) to 2-selenouridine (Se2U-RNA). Acts in a two-step process involving geranylation of 2-thiouridine (S2U) to S-geranyl-2-thiouridine (geS2U) and subsequent selenation of the latter derivative to 2-selenouridine (Se2U) in the tRNA chain. This is tRNA 2-selenouridine synthase from Sulfurovum sp. (strain NBC37-1).